Consider the following 242-residue polypeptide: Probable transcriptional regulatory protein lp_2253 (242 aa).

A disordered region spans residues 1 to 21 (MSGHSKWHNIQGRKNAQDAKR).

This sequence belongs to the TACO1 family.

It is found in the cytoplasm. This Lactiplantibacillus plantarum (strain ATCC BAA-793 / NCIMB 8826 / WCFS1) (Lactobacillus plantarum) protein is Probable transcriptional regulatory protein lp_2253.